The following is a 158-amino-acid chain: Large ribosomal subunit protein bL19 (158 aa).

The interval 1–35 (MTADSKDTSMSEDNTETATAIENSSAMVTDVTSKS) is disordered. Residues 16–35 (ETATAIENSSAMVTDVTSKS) show a composition bias toward polar residues.

The protein belongs to the bacterial ribosomal protein bL19 family.

This protein is located at the 30S-50S ribosomal subunit interface and may play a role in the structure and function of the aminoacyl-tRNA binding site. This chain is Large ribosomal subunit protein bL19, found in Prochlorococcus marinus (strain MIT 9313).